A 109-amino-acid chain; its full sequence is A-type ATP synthase subunit F (109 aa).

Belongs to the V-ATPase F subunit family. As to quaternary structure, has multiple subunits with at least A(3), B(3), C, D, E, F, H, I and proteolipid K(x).

Its subcellular location is the cell membrane. Functionally, component of the A-type ATP synthase that produces ATP from ADP in the presence of a proton gradient across the membrane. The sequence is that of A-type ATP synthase subunit F from Halorubrum lacusprofundi (strain ATCC 49239 / DSM 5036 / JCM 8891 / ACAM 34).